The sequence spans 262 residues: Spindlin-W (262 aa).

Residues 1 to 49 form a disordered region; sequence MKTPFGKSPAQRSRADAGHTRVSASMMKKRTSHKKHRNNVGPSKPISQP. Residues 27 to 38 are compositionally biased toward basic residues; it reads MKKRTSHKKHRN.

The protein belongs to the SPIN/STSY family. As to expression, expressed predominantly in ovarian granulosa and thecal cell.

The protein resides in the nucleus. Its function is as follows. May play a role in mitosis. The protein is Spindlin-W (SPINW) of Gallus gallus (Chicken).